A 1072-amino-acid polypeptide reads, in one-letter code: Carbamoyl phosphate synthase large chain (1072 aa).

The carboxyphosphate synthetic domain stretch occupies residues Met-1 to Glu-401. 12 residues coordinate ATP: Arg-129, Arg-169, Gly-175, Gly-176, Lys-208, Leu-210, Glu-215, Gly-241, Val-242, His-243, Gln-284, and Glu-298. In terms of domain architecture, ATP-grasp 1 spans Lys-133–Ile-327. Positions 284, 298, and 300 each coordinate Mg(2+). The Mn(2+) site is built by Gln-284, Glu-298, and Asn-300. The tract at residues Ile-402–Asp-544 is oligomerization domain. The interval Glu-545–Gly-929 is carbamoyl phosphate synthetic domain. The 191-residue stretch at Ser-671–Leu-861 folds into the ATP-grasp 2 domain. ATP-binding residues include Arg-707, Lys-746, Ile-748, Glu-752, Gly-777, Val-778, His-779, Ser-780, Gln-820, and Glu-832. Mg(2+) contacts are provided by Gln-820, Glu-832, and Asn-834. Mn(2+) is bound by residues Gln-820, Glu-832, and Asn-834. The MGS-like domain maps to Leu-930–Leu-1072. Positions Leu-930 to Leu-1072 are allosteric domain.

It belongs to the CarB family. As to quaternary structure, composed of two chains; the small (or glutamine) chain promotes the hydrolysis of glutamine to ammonia, which is used by the large (or ammonia) chain to synthesize carbamoyl phosphate. Tetramer of heterodimers (alpha,beta)4. Mg(2+) serves as cofactor. The cofactor is Mn(2+).

It catalyses the reaction hydrogencarbonate + L-glutamine + 2 ATP + H2O = carbamoyl phosphate + L-glutamate + 2 ADP + phosphate + 2 H(+). The catalysed reaction is hydrogencarbonate + NH4(+) + 2 ATP = carbamoyl phosphate + 2 ADP + phosphate + 2 H(+). It participates in amino-acid biosynthesis; L-arginine biosynthesis; carbamoyl phosphate from bicarbonate: step 1/1. It functions in the pathway pyrimidine metabolism; UMP biosynthesis via de novo pathway; (S)-dihydroorotate from bicarbonate: step 1/3. In terms of biological role, large subunit of the glutamine-dependent carbamoyl phosphate synthetase (CPSase). CPSase catalyzes the formation of carbamoyl phosphate from the ammonia moiety of glutamine, carbonate, and phosphate donated by ATP, constituting the first step of 2 biosynthetic pathways, one leading to arginine and/or urea and the other to pyrimidine nucleotides. The large subunit (synthetase) binds the substrates ammonia (free or transferred from glutamine from the small subunit), hydrogencarbonate and ATP and carries out an ATP-coupled ligase reaction, activating hydrogencarbonate by forming carboxy phosphate which reacts with ammonia to form carbamoyl phosphate. The sequence is that of Carbamoyl phosphate synthase large chain from Thermoanaerobacter sp. (strain X514).